The following is a 558-amino-acid chain: MHFDYIIIGAGSAGNVLATRLTEDSDTTVLLLEAGGPDYRADFRTQMPAALAFPLQGKRYNWAYETEPEPHMNYRRMECGRGKGLGGSSLINGMCYIRGNAMDLDNWAQEPGLEHWSYLNCLPYYRKAETRDIGPNDYHGGDGPVSVATPKHNNNPLFHAMIEAGVQAGYPRTDDLNGYQQEGFGPMDRTVTPQGRRASTARGYLDQAKGRPNLTIITHALTDHILFEGKKASGVEWLEGDSTIPTRAMARKEVLLCAGAIASPQILQRSGVGDASLLKAFDIPLVHHLPGVGENLQDHLEMYLQYECKEPVSLYPALQWWNQPKIGAEWLFGGTGVGASNHFEAGGFIRSSEAFSWPNIQYHFLPVAINYNGSNAVKEHGFQCHVGSMRSPSRGHVHIKSRDPREHPAILFNYMSTGQDWQEFRDAIRITREIINQPALDKYRGREISPGITCQTDEQLDAFVRDHAETAFHPCGTCKMGYDEMAVVDGEGRVHGVENLRVVDASIMPQIITGNLNATTIMIGEKMADAIRGREPLAKSTASYYVAGDAPVRQPPLR.

4-33 (DYIIIGAGSAGNVLATRLTEDSDTTVLLLE) is an FAD binding site. The Proton acceptor role is filled by His473.

This sequence belongs to the GMC oxidoreductase family. The cofactor is FAD.

The enzyme catalyses choline + A = betaine aldehyde + AH2. It carries out the reaction betaine aldehyde + NAD(+) + H2O = glycine betaine + NADH + 2 H(+). It functions in the pathway amine and polyamine biosynthesis; betaine biosynthesis via choline pathway; betaine aldehyde from choline (cytochrome c reductase route): step 1/1. Involved in the biosynthesis of the osmoprotectant glycine betaine. Catalyzes the oxidation of choline to betaine aldehyde and betaine aldehyde to glycine betaine at the same rate. This chain is Oxygen-dependent choline dehydrogenase, found in Citrobacter koseri (strain ATCC BAA-895 / CDC 4225-83 / SGSC4696).